A 102-amino-acid chain; its full sequence is Small ribosomal subunit protein eS24 (102 aa).

The protein belongs to the eukaryotic ribosomal protein eS24 family.

The chain is Small ribosomal subunit protein eS24 (rps24e) from Haloarcula marismortui (strain ATCC 43049 / DSM 3752 / JCM 8966 / VKM B-1809) (Halobacterium marismortui).